Consider the following 1060-residue polypeptide: FACT complex subunit SPT16 (1060 aa).

Positions 458-490 (FNDDNETQKENNNNNNKRPGLSQTSNTTALKLE) are disordered. Polar residues predominate over residues 478-490 (LSQTSNTTALKLE). Residues 508 to 532 (NADDANSEKLRQEIQIKLHEKRLQE) adopt a coiled-coil conformation. The disordered stretch occupies residues 977–1060 (QGESDEEEES…AKADRNSGFD (84 aa)). Acidic residues-rich tracts occupy residues 979 to 990 (ESDEEEESDEES) and 997 to 1044 (EDPQ…EDWD). Over residues 1045–1060 (ALERKAAKADRNSGFD) the composition is skewed to basic and acidic residues.

This sequence belongs to the peptidase M24 family. SPT16 subfamily. As to quaternary structure, forms a stable heterodimer with POB3. The SPT16-POB3 dimer weakly associates with multiple molecules of NHP6 to form the FACT complex.

Its subcellular location is the nucleus. It localises to the chromosome. In terms of biological role, component of the FACT complex, a general chromatin factor that acts to reorganize nucleosomes. The FACT complex is involved in multiple processes that require DNA as a template such as mRNA elongation, DNA replication and DNA repair. During transcription elongation the FACT complex acts as a histone chaperone that both destabilizes and restores nucleosomal structure. It facilitates the passage of RNA polymerase II and transcription by promoting the dissociation of one histone H2A-H2B dimer from the nucleosome, then subsequently promotes the reestablishment of the nucleosome following the passage of RNA polymerase II. The polypeptide is FACT complex subunit SPT16 (CDC68) (Candida albicans (strain SC5314 / ATCC MYA-2876) (Yeast)).